A 359-amino-acid polypeptide reads, in one-letter code: Apelin receptor B (359 aa).

Residues 1–36 are Extracellular-facing; it reads MNAMDNMTADYSPDYFDDAVNSSMCEYDEWEPSYSL. N-linked (GlcNAc...) asparagine glycans are attached at residues Asn-6 and Asn-21. 2 disulfide bridges follow: Cys-25-Cys-288 and Cys-107-Cys-186. A helical transmembrane segment spans residues 37–57; the sequence is IPVLYMLIFILGLTGNGVVIF. Residues 58-75 lie on the Cytoplasmic side of the membrane; it reads TVWRAQSKRRAADVYIGN. The chain crosses the membrane as a helical span at residues 76–96; sequence LALADLTFVVTLPLWAVYTAL. Residues 97 to 108 lie on the Extracellular side of the membrane; that stretch reads GYHWPFGVALCK. A helical transmembrane segment spans residues 109–129; the sequence is ISSYVVLLNMYASVFCLTCLS. The Cytoplasmic segment spans residues 130–151; the sequence is LDRYMAIVHSLTSTQLRTRGHM. A helical transmembrane segment spans residues 152-172; it reads RASLTAIWLLSGVLAAPTLLF. Residues 173-213 are Extracellular-facing; sequence RTTVYDVETNRTSCAMDFNLVVSQPGQETYWIAGLSISSTA. The N-linked (GlcNAc...) asparagine glycan is linked to Asn-182. The helical transmembrane segment at 214-234 threads the bilayer; that stretch reads LGFLIPLLAMMVCYGFIGCTV. At 235–251 the chain is on the cytoplasmic side; that stretch reads TRHFNSLRKEDQRKRRL. A helical membrane pass occupies residues 252–272; it reads LKIITTLVVVFAACWMPFHVV. Residues 273–286 lie on the Extracellular side of the membrane; that stretch reads KTMDALSYLNLAPD. The chain crosses the membrane as a helical span at residues 287–307; sequence SCTFLNLLLLAHPYATCLAYV. The Cytoplasmic portion of the chain corresponds to 308–359; the sequence is NSCLNPLLYAFFDLRFRSQCLCLLNLKKALHASPASSLSSQKTEAQSLATKV.

Belongs to the G-protein coupled receptor 1 family. Mesendodermal expression at the blastoderm margin appears by 4.5 hpf. At early gastrulation, expression is maintained ventrolaterally while expression in dorsal cells and random deep cells declines. During gastrulation and segmentation, expression is maintained in adaxial, intermediate, and lateral plate mesoderm. During late segmentation, expressed in several regions including the forming heart. By 24 hpf, expressed in the dorsal aorta, caudal vein, and intersomitic blood vessels.

It is found in the cell membrane. G protein-coupled receptor for peptide hormones apelin (apln) and apelin receptor early endogenous ligand (apela), that plays a role in the regulation of normal cardiovascular function and fluid homeostasis. When acting as apelin receptor, activates both G(i) protein pathway that inhibits adenylate cyclase activity, and the beta-arrestin pathway that promotes internalization of the receptor. Also functions as mechanoreceptor that is activated by pathological stimuli in a G-protein-independent fashion to induce beta-arrestin signaling, hence eliciting cardiac hypertrophy. However, the presence of apelin ligand blunts cardiac hypertrophic induction from APLNR/APJ on response to pathological stimuli. Plays a key role in early development such as gastrulation, blood vessels formation and heart morphogenesis by acting as a receptor for apela hormone, promoting endoderm and mesendoderm cell migration and regulating the migration of cells fated to become myocardial progenitors, respectively. Positively regulates angioblast migration toward the embryonic midline, i.e. the position of the future vessel formation, during vasculogenesis. May promote sinus venosus (SV)-derived endothelial cells migration into the developing heart to promote coronary blood vessel development. Required for cardiovascular development, particularly for intersomitic vein angiogenesis by acting as a receptor for apln hormone. Plays a role in various processes in adults such as regulation of blood vessel formation, blood pressure, heart contractility and heart failure. Acts redundantly with agtrl1a in heart development. In terms of biological role, g protein-coupled receptor for peptide hormones apelin (APLN) and apelin receptor early endogenous ligand (APELA/ELA), that plays a role in the regulation of normal cardiovascular function and fluid homeostasis. When acting as apelin receptor, activates both G(i) protein pathway that inhibits adenylate cyclase activity, and the beta-arrestin pathway that promotes internalization of the receptor. APLNR/APJ also functions as mechanoreceptor that is activated by pathological stimuli in a G-protein-independent fashion to induce beta-arrestin signaling, hence eliciting cardiac hypertrophy. Plays a key role in early development such as gastrulation, blood vessels formation and heart morphogenesis by acting as a APELA receptor. May promote angioblast migration toward the embryonic midline, i.e. the position of the future vessel formation, during vasculogenesis. Promotes sinus venosus (SV)-derived endothelial cells migration into the developing heart to promote coronary blood vessel development. Also plays a role in various processes in adults such as regulation of blood vessel formation, blood pressure, heart contractility and heart failure. This Danio rerio (Zebrafish) protein is Apelin receptor B (aplnrb).